The sequence spans 24 residues: Flavin reductase (NADPH) (24 aa).

Gly-9, Thr-11, Gly-12, and Thr-14 together coordinate NADP(+).

The protein belongs to the BLVRB family. As to quaternary structure, monomer. In terms of tissue distribution, detected in erythrocytes (at protein level).

It is found in the cytoplasm. It carries out the reaction reduced riboflavin + NADP(+) = riboflavin + NADPH + 2 H(+). The enzyme catalyses bilirubin IXbeta + NADP(+) = biliverdin IXbeta + NADPH + H(+). The catalysed reaction is FMNH2 + NAD(+) = FMN + NADH + 2 H(+). It catalyses the reaction FMNH2 + NADP(+) = FMN + NADPH + 2 H(+). It carries out the reaction S-nitroso-CoA + L-cysteinyl-[protein] = S-nitroso-L-cysteinyl-[protein] + CoA. The enzyme catalyses L-cysteinyl-[SCAN] + S-nitroso-CoA = S-nitroso-L-cysteinyl-[SCAN] + CoA. The catalysed reaction is S-nitroso-L-cysteinyl-[SCAN] + L-cysteinyl-[protein] = L-cysteinyl-[SCAN] + S-nitroso-L-cysteinyl-[protein]. Enzyme that can both act as a NAD(P)H-dependent reductase and a S-nitroso-CoA-dependent nitrosyltransferase. Promotes fetal heme degradation during development. Also expressed in adult tissues, where it acts as a regulator of hematopoiesis, intermediary metabolism (glutaminolysis, glycolysis, TCA cycle and pentose phosphate pathway) and insulin signaling. Has a broad specificity oxidoreductase activity by catalyzing the NAD(P)H-dependent reduction of a variety of flavins, such as riboflavin, FAD or FMN, biliverdins, methemoglobin and PQQ (pyrroloquinoline quinone). Contributes to fetal heme catabolism by catalyzing reduction of biliverdin IXbeta into bilirubin IXbeta in the liver. Biliverdin IXbeta, which constitutes the major heme catabolite in the fetus is not present in adult. Does not reduce bilirubin IXalpha. Can also reduce the complexed Fe(3+) iron to Fe(2+) in the presence of FMN and NADPH. Acts as a protein nitrosyltransferase by catalyzing nitrosylation of cysteine residues of target proteins, such as HMOX2, INSR and IRS1. S-nitroso-CoA-dependent nitrosyltransferase activity is mediated via a 'ping-pong' mechanism: BLVRB first associates with both S-nitroso-CoA and protein substrate, nitric oxide group is then transferred from S-nitroso-CoA to Cys residues of BLVRB and from S-nitroso-BLVRB to the protein substrate. Inhibits insulin signaling by mediating nitrosylation of INSR and IRS1, leading to their inhibition. In Aquarana catesbeiana (American bullfrog), this protein is Flavin reductase (NADPH) (BLVRB).